A 447-amino-acid polypeptide reads, in one-letter code: Na(+)-translocating NADH-quinone reductase subunit A (447 aa).

This sequence belongs to the NqrA family. In terms of assembly, composed of six subunits; NqrA, NqrB, NqrC, NqrD, NqrE and NqrF.

The enzyme catalyses a ubiquinone + n Na(+)(in) + NADH + H(+) = a ubiquinol + n Na(+)(out) + NAD(+). In terms of biological role, NQR complex catalyzes the reduction of ubiquinone-1 to ubiquinol by two successive reactions, coupled with the transport of Na(+) ions from the cytoplasm to the periplasm. NqrA to NqrE are probably involved in the second step, the conversion of ubisemiquinone to ubiquinol. This is Na(+)-translocating NADH-quinone reductase subunit A from Neisseria meningitidis serogroup C / serotype 2a (strain ATCC 700532 / DSM 15464 / FAM18).